Consider the following 219-residue polypeptide: Germin-like protein subfamily 2 member 3 (219 aa).

The first 22 residues, 1–22 (MATSMIPIFVTFMLVAAHMALA), serve as a signal peptide directing secretion. A disulfide bond links Cys-31 and Cys-46. The 150-residue stretch at 60-209 (IGLATAAATA…AFGAAAPEIQ (150 aa)) folds into the Cupin type-1 domain. N-linked (GlcNAc...) asparagine glycosylation is present at Asn-70. Mn(2+) contacts are provided by His-109, His-111, Glu-116, and His-155.

This sequence belongs to the germin family. In terms of assembly, oligomer (believed to be a pentamer but probably hexamer).

The protein resides in the secreted. It is found in the extracellular space. The protein localises to the apoplast. In terms of biological role, may play a role in plant defense. Probably has no oxalate oxidase activity even if the active site is conserved. The sequence is that of Germin-like protein subfamily 2 member 3 (GLP8) from Arabidopsis thaliana (Mouse-ear cress).